Reading from the N-terminus, the 344-residue chain is Probable Delta(7)-sterol 5(6)-desaturase (344 aa).

The next 3 membrane-spanning stretches (helical) occupy residues 76-96, 123-143, and 160-180; these read LSLFLILWLFGLVTYYVFASL, QTNAALPVMAFFTFPFLVAEV, and WYDFFQFPLFIMFTDFGIYWI. The Fatty acid hydroxylase domain maps to 167–292; it reads PLFIMFTDFG…FTTLWDRLGG (126 aa). Residues 181–185 carry the Histidine box-1 motif; the sequence is HRGLH. A Histidine box-2 motif is present at residues 194–198; it reads HKPHH. The chain crosses the membrane as a helical span at residues 224 to 244; that stretch reads HIFPFIFPLQKMAYVGLFVFI. Residues 269-273 carry the Histidine box-3 motif; the sequence is HSVHH.

The protein belongs to the sterol desaturase family. The cofactor is Fe cation.

The protein resides in the endoplasmic reticulum membrane. The enzyme catalyses a Delta(7)-sterol + 2 Fe(II)-[cytochrome b5] + O2 + 2 H(+) = a Delta(5),Delta(7)-sterol + 2 Fe(III)-[cytochrome b5] + 2 H2O. The protein operates within steroid metabolism; ergosterol biosynthesis; ergosterol from zymosterol: step 3/5. Its function is as follows. Catalyzes the introduction of a C-5 double bond in the B ring of ergosterol. May contribute to the regulation of ergosterol biosynthesis. This Neurospora crassa (strain ATCC 24698 / 74-OR23-1A / CBS 708.71 / DSM 1257 / FGSC 987) protein is Probable Delta(7)-sterol 5(6)-desaturase.